The chain runs to 995 residues: MNVTKPATQRPKLPSVGRLGLVDALAGARLAELGWTEHDDQAHVDLLWSLSRAPDADAALKVLVRLAENPDTGWDELNAALLNERSLRGRLFAVLGSSLSLGDHLVANPQSWKLLRGKVALPSHAALLESFVDLAEEVAAAPASAVHRLRALHRDHVLVLAGLDLAATVEDEPVLPFTVVAAHLADIADAALAAALRLAEKTVCRDRTPPRLAVIAMGKCGARELNYVSDVDVIFVAERADPISIRVAGEMMRVASSTFFEVDAGLRPEGRSGELVRTVESHIAYYQRWAKTWEFQALLKARAAVGDAELGQSYLAALMPMVWTACERDDFVAEVQAMRRRVEQLVPADIRGRELKLGTGGLRDVEFVAQLLQLVHGRSDESLHVASTVDALSALGEGGYIGREDAANMIASYEFLRLLEHRLQLQRLKRTHLLPEFDDEEAVRWLARAAHIRPDGRHDAAGMLREELKHQNVRVSRLHAKLFYQPLLESIAPAGLEIAGRGMTSEAAERQLAALGYEGPQTALKHMAALVNHSGRRARVQSVLLPRLLDWLSYAPDPDGGLLAYRRLSEALATQSWYLSTLRDKPTVGRRLMHVLGTSAFVPDLLMRAPEVIQNYGDGRTGPKLLETEPAAVARALIASAGRYSDPLRAIAAARTLRRRELARIGSADLLGLLEVTEVCRALTSVWVAVLQSALEAMIRANTPEGGRPLARIAVIGMGRLGGSELSYGSDADVMYVCEPASGVTDAQAVKWSTAVAEQVRAKLGTPSVDPPLEVDANLRPEGRNGPLVRTLASYEAYYAQWAQAWEIQALLRAHAVAGDAELGQRFLLLVDHTRYPPDGVSAEAVHEIRRIKARVESERLPRGADPNTHTKLGRGGLADIEWTVQLLQLQNAHEIEALHNTSTLESLDAIAEAKLVAEDEVKLLRQAWLTATRARNALVLVRGKPTDQLPGPGRQLNAVAVAAGWHNDDGGEFLDNYLRVTRRAKAVVRKVFGS.

Residues 1–487 are adenylyl removase; it reads MNVTKPATQR…LHAKLFYQPL (487 aa). An adenylyl transferase region spans residues 492–995; sequence APAGLEIAGR…KAVVRKVFGS (504 aa).

The protein belongs to the GlnE family. It depends on Mg(2+) as a cofactor.

The enzyme catalyses [glutamine synthetase]-O(4)-(5'-adenylyl)-L-tyrosine + phosphate = [glutamine synthetase]-L-tyrosine + ADP. The catalysed reaction is [glutamine synthetase]-L-tyrosine + ATP = [glutamine synthetase]-O(4)-(5'-adenylyl)-L-tyrosine + diphosphate. In terms of biological role, involved in the regulation of glutamine synthetase GlnA, a key enzyme in the process to assimilate ammonia. When cellular nitrogen levels are high, the C-terminal adenylyl transferase (AT) inactivates GlnA by covalent transfer of an adenylyl group from ATP to specific tyrosine residue of GlnA, thus reducing its activity. Conversely, when nitrogen levels are low, the N-terminal adenylyl removase (AR) activates GlnA by removing the adenylyl group by phosphorolysis, increasing its activity. The regulatory region of GlnE binds the signal transduction protein PII (GlnB) which indicates the nitrogen status of the cell. The sequence is that of Bifunctional glutamine synthetase adenylyltransferase/adenylyl-removing enzyme from Mycobacterium marinum (strain ATCC BAA-535 / M).